Here is a 539-residue protein sequence, read N- to C-terminus: Chaperonin GroEL (539 aa).

Residues 30-33, K51, 87-91, G415, 479-481, and D495 each bind ATP; these read TLGP, DGTTT, and NAA.

Belongs to the chaperonin (HSP60) family. Forms a cylinder of 14 subunits composed of two heptameric rings stacked back-to-back. Interacts with the co-chaperonin GroES.

The protein localises to the cytoplasm. The catalysed reaction is ATP + H2O + a folded polypeptide = ADP + phosphate + an unfolded polypeptide.. Its function is as follows. Together with its co-chaperonin GroES, plays an essential role in assisting protein folding. The GroEL-GroES system forms a nano-cage that allows encapsulation of the non-native substrate proteins and provides a physical environment optimized to promote and accelerate protein folding. The protein is Chaperonin GroEL of Enterobacter asburiae.